The primary structure comprises 79 residues: UPF0291 protein SAV1341 (79 aa).

A disordered region spans residues 56 to 79; sequence IDPEGNDVTPEKIKEIQQKRDNKN. Basic and acidic residues predominate over residues 64-79; it reads TPEKIKEIQQKRDNKN.

The protein belongs to the UPF0291 family.

It localises to the cytoplasm. The sequence is that of UPF0291 protein SAV1341 from Staphylococcus aureus (strain Mu50 / ATCC 700699).